Reading from the N-terminus, the 122-residue chain is Small ribosomal subunit protein uS13 (122 aa).

The disordered stretch occupies residues histidine 92–lysine 122.

It belongs to the universal ribosomal protein uS13 family. Part of the 30S ribosomal subunit. Forms a loose heterodimer with protein S19. Forms two bridges to the 50S subunit in the 70S ribosome.

Located at the top of the head of the 30S subunit, it contacts several helices of the 16S rRNA. In the 70S ribosome it contacts the 23S rRNA (bridge B1a) and protein L5 of the 50S subunit (bridge B1b), connecting the 2 subunits; these bridges are implicated in subunit movement. Contacts the tRNAs in the A and P-sites. The polypeptide is Small ribosomal subunit protein uS13 (Paracoccus denitrificans (strain Pd 1222)).